The chain runs to 1103 residues: PH, RCC1 and FYVE domains-containing protein 1 (1103 aa).

In terms of domain architecture, PH spans Lys22–Ile123. The tract at residues Asp144 to Asp233 is disordered. Composition is skewed to low complexity over residues Ser151 to Gly169 and Ser217 to Ala231. RCC1 repeat units follow at residues Leu237–Arg298, Gln299–Leu351, Gly353–Ser406, Tyr407–Glu458, Ser471–Thr522, Gly524–Ser574, and Arg575–Leu626. The FYVE-type zinc-finger motif lies at Gly632–Ser694. Zn(2+) is bound by residues Cys638, Cys641, Cys654, Cys657, Cys662, Cys665, Cys686, and Cys689. The interval Ala783 to Thr818 is disordered. Low complexity predominate over residues Pro791–Thr818. Residues Ala828–Lys904 adopt a coiled-coil conformation. The segment covering Asn962 to Ala979 has biased composition (polar residues). The segment at Asn962–Ser988 is disordered. In terms of domain architecture, BRX spans Ala1023–Asn1078. The interval Val1079 to His1103 is disordered.

In terms of tissue distribution, mostly expressed in flowers, and, to a lower extent, in stems, leaves, siliques, seeds.

Its function is as follows. Binds to phosphatidic acid and to phosphoinositides such as PtdIns3P, PtdIns(3,4)P(2), PtdIns(3,4,5)P(3) and PtdIns(4,5)P(2). Catalyzes guanine nucleotide exchange on specific Rab proteins. This Arabidopsis thaliana (Mouse-ear cress) protein is PH, RCC1 and FYVE domains-containing protein 1.